We begin with the raw amino-acid sequence, 205 residues long: MSAGKSYRKKMKQRRMNMKISKYALGILMLSLVFVLSACGNNNSTKESTHDNHSDSSTHEEMDHSGSADVPEGLQESKNPKYKVGSQVIINTSHMKGMKGAEATVTGAYDTTAYVVSYTPTNGGQRVDHHKWVIQEEIKDAGDKTLQPGDQVILEASHMKGMKGATAEIDSAEKTTVYMVDYTSTTSGEKVKNHKWVTEDELSAK.

Positions 1-40 are cleaved as a signal peptide; it reads MSAGKSYRKKMKQRRMNMKISKYALGILMLSLVFVLSACG. Positions 44–82 are disordered; sequence STKESTHDNHSDSSTHEEMDHSGSADVPEGLQESKNPKY. The span at 47-66 shows a compositional bias: basic and acidic residues; it reads ESTHDNHSDSSTHEEMDHSG.

This is an uncharacterized protein from Bacillus subtilis (strain 168).